The sequence spans 124 residues: Cytochrome c2 (124 aa).

Residue Gln1 is modified to Pyrrolidone carboxylic acid. Positions 15, 18, 19, and 100 each coordinate heme c.

Post-translationally, binds 1 heme c group covalently per subunit.

It is found in the periplasm. Its function is as follows. Cytochrome c2 is found mainly in purple, non-sulfur, photosynthetic bacteria where it functions as the electron donor to the oxidized bacteriochlorophyll in the photophosphorylation pathway. However, it may also have a role in the respiratory chain and is found in some non-photosynthetic bacteria. This chain is Cytochrome c2 (cycA), found in Cereibacter sphaeroides (Rhodobacter sphaeroides).